A 224-amino-acid polypeptide reads, in one-letter code: UPF0758 protein PSPPH_0210 (224 aa).

In terms of domain architecture, MPN spans 102 to 224; it reads ALENPTQVRN…PLSMVERGLM (123 aa). H173, H175, and D186 together coordinate Zn(2+). Residues 173–186 carry the JAMM motif motif; the sequence is HNHPSGITTPSRSD.

This sequence belongs to the UPF0758 family.

This is UPF0758 protein PSPPH_0210 from Pseudomonas savastanoi pv. phaseolicola (strain 1448A / Race 6) (Pseudomonas syringae pv. phaseolicola (strain 1448A / Race 6)).